A 305-amino-acid polypeptide reads, in one-letter code: tRNA pseudouridine synthase B (305 aa).

The Nucleophile role is filled by aspartate 39.

It belongs to the pseudouridine synthase TruB family. Type 1 subfamily.

It carries out the reaction uridine(55) in tRNA = pseudouridine(55) in tRNA. Functionally, responsible for synthesis of pseudouridine from uracil-55 in the psi GC loop of transfer RNAs. This Staphylococcus saprophyticus subsp. saprophyticus (strain ATCC 15305 / DSM 20229 / NCIMB 8711 / NCTC 7292 / S-41) protein is tRNA pseudouridine synthase B.